Here is a 55-residue protein sequence, read N- to C-terminus: Neurotoxin B-II (55 aa).

Proline 10 carries the hydroxyproline modification. 4 disulfides stabilise this stretch: cysteine 12/cysteine 48, cysteine 16/cysteine 52, cysteine 23/cysteine 41, and cysteine 26/cysteine 37.

This sequence belongs to the worm B-toxin family.

The protein localises to the secreted. This toxin increases the excitability of nerves by delaying the inactivation of the voltage-gated sodium channel (Nav). Only acts on some crustacean. Neurotoxin B-II is less abundant, but 15-fold more toxic than neurotoxin B-VI. The protein is Neurotoxin B-II of Cerebratulus lacteus (Milky ribbon worm).